Consider the following 458-residue polypeptide: tRNA-2-methylthio-N(6)-dimethylallyladenosine synthase (458 aa).

The MTTase N-terminal domain maps to 15 to 134 (KKVFIKTYGC…LPELLEKAKQ (120 aa)). 6 residues coordinate [4Fe-4S] cluster: C24, C60, C97, C175, C179, and C182. The 235-residue stretch at 161 to 395 (RKRGVSAFLT…LLLEQQNTFL (235 aa)) folds into the Radical SAM core domain. The region spanning 396-457 (RSKIGQKTDV…SNSFVGEMTN (62 aa)) is the TRAM domain.

The protein belongs to the methylthiotransferase family. MiaB subfamily. Monomer. [4Fe-4S] cluster is required as a cofactor.

It localises to the cytoplasm. The enzyme catalyses N(6)-dimethylallyladenosine(37) in tRNA + (sulfur carrier)-SH + AH2 + 2 S-adenosyl-L-methionine = 2-methylsulfanyl-N(6)-dimethylallyladenosine(37) in tRNA + (sulfur carrier)-H + 5'-deoxyadenosine + L-methionine + A + S-adenosyl-L-homocysteine + 2 H(+). Its function is as follows. Catalyzes the methylthiolation of N6-(dimethylallyl)adenosine (i(6)A), leading to the formation of 2-methylthio-N6-(dimethylallyl)adenosine (ms(2)i(6)A) at position 37 in tRNAs that read codons beginning with uridine. This is tRNA-2-methylthio-N(6)-dimethylallyladenosine synthase from Bartonella tribocorum (strain CIP 105476 / IBS 506).